The sequence spans 468 residues: Methionine aminopeptidase 2 (468 aa).

A compositionally biased stretch (basic and acidic residues) spans 63-74; that stretch reads AAKEATKKDAKG. A disordered region spans residues 63–87; sequence AAKEATKKDAKGGKGKANGSAAATA. His219 contributes to the substrate binding site. A divalent metal cation is bound by residues Asp239, Asp250, and His319. Residue His327 coordinates substrate. Glu352 and Glu449 together coordinate a divalent metal cation.

Belongs to the peptidase M24A family. Methionine aminopeptidase eukaryotic type 2 subfamily. Co(2+) serves as cofactor. Requires Zn(2+) as cofactor. Mn(2+) is required as a cofactor. It depends on Fe(2+) as a cofactor.

The protein resides in the cytoplasm. The enzyme catalyses Release of N-terminal amino acids, preferentially methionine, from peptides and arylamides.. Its activity is regulated as follows. Inhibited by the fumagillin analog, TNP-470. Cotranslationally removes the N-terminal methionine from nascent proteins. The N-terminal methionine is often cleaved when the second residue in the primary sequence is small and uncharged (Met-Ala-, Cys, Gly, Pro, Ser, Thr, or Val). Required for germ cell proliferation and/or differentiation. The chain is Methionine aminopeptidase 2 from Caenorhabditis elegans.